A 372-amino-acid chain; its full sequence is Transaldolase 2 (372 aa).

K140 functions as the Schiff-base intermediate with substrate in the catalytic mechanism.

The protein belongs to the transaldolase family. Type 2 subfamily.

Its subcellular location is the cytoplasm. It carries out the reaction D-sedoheptulose 7-phosphate + D-glyceraldehyde 3-phosphate = D-erythrose 4-phosphate + beta-D-fructose 6-phosphate. It participates in carbohydrate degradation; pentose phosphate pathway; D-glyceraldehyde 3-phosphate and beta-D-fructose 6-phosphate from D-ribose 5-phosphate and D-xylulose 5-phosphate (non-oxidative stage): step 2/3. Functionally, transaldolase is important for the balance of metabolites in the pentose-phosphate pathway. The protein is Transaldolase 2 of Streptomyces avermitilis (strain ATCC 31267 / DSM 46492 / JCM 5070 / NBRC 14893 / NCIMB 12804 / NRRL 8165 / MA-4680).